A 254-amino-acid polypeptide reads, in one-letter code: HLA class II histocompatibility antigen, DR alpha chain (254 aa).

Positions 1-25 are cleaved as a signal peptide; the sequence is MAISGVPVLGFFIIAVLMSAQESWA. Positions 26 to 109 are alpha-1; the sequence is IKEEHVIIQA…KRSNYTPITN (84 aa). Residues 26-216 are Extracellular-facing; that stretch reads IKEEHVIIQA…APSPLPETTE (191 aa). 2 N-linked (GlcNAc...) asparagine glycosylation sites follow: Asn-103 and Asn-143. The interval 110–203 is alpha-2; sequence VPPEVTVLTN…GLDEPLLKHW (94 aa). The Ig-like C1-type domain maps to 112 to 204; sequence PEVTVLTNSP…LDEPLLKHWE (93 aa). Cys-132 and Cys-188 are oxidised to a cystine. The interval 204-216 is connecting peptide; the sequence is EFDAPSPLPETTE. The helical transmembrane segment at 217-239 threads the bilayer; sequence NVVCALGLTVGLVGIIIGTIFII. Residues 240 to 254 lie on the Cytoplasmic side of the membrane; it reads KGLRKSNAAERRGPL. A Glycyl lysine isopeptide (Lys-Gly) (interchain with G-Cter in ubiquitin) cross-link involves residue Lys-244.

Belongs to the MHC class II family. As to quaternary structure, heterotrimer that consists of an alpha chain HLA-DRA, a beta chain HLA-DRB and a peptide (peptide-MHCII). Newly synthesized alpha and beta chains forms a heterodimer (MHCII) that associates with the CD74/invariant chain (Ii) in the endoplasmic reticulum (ER). Ii is a trimer composed of three subunits and each subunit interacts with one MHCII dimer, blocking the peptide-binding cleft. As a result, MHCII molecules cannot bind peptides present in the ER. The complex of MHCII and CD74/Ii is transported in vesicles from ER to Golgi to lysosomes, where it encounters antigenic peptides generated via proteolysis of endocytosed antigens. MHCII dimers are dissociated from CD74/Ii by the combined action of proteolysis and HLA-DM. Lysosomal enzymes such as cathepsin, degrade CD74/Ii leaving a 24 amino acid remnant called class II-associated Ii or CLIP. Interacts (via the peptide binding cleft) with CLIP; this interaction inhibits antigen peptide binding before entry in the endosomal compartment. The displacement of CLIP and replacement by a high affinity peptide in lysosomes is performed by HLA-DM heterodimer. HLA-DM catalyzes CLIP dissociation from MHCII, stabilizes empty MHCII and mediates the selection of high affinity peptides. Interacts with HLA-DM heterodimer; this interaction is direct. Interacts (via alpha-1 domain) with TCR (via CDRs). Interacts (via alpha-2 domain) with CD4 (via Ig-like V-type domain); this interaction increases the affinity of TCR for peptide-MHCII. In terms of assembly, (Microbial infection) Interacts with Epstein-Barr virus BZLF2/gp42. (Microbial infection) Interacts with Staphylococcus aureus enterotoxin A/entA, enterotoxin B/entB, enterotoxin C1/entC1, enterotoxin D/entD, and enterotoxin H/entH. Post-translationally, ubiquitinated by MARCHF1 or MARCHF8 at Lys-244 leading to down-regulation of MHCII. When associated with ubiquitination of the beta chain at 'Lys-254', the down-regulation of MHCII may be highly effective. In terms of tissue distribution, expressed in professional APCs: macrophages, dendritic cells and B cells (at protein level). Expressed in thymic epithelial cells (at protein level).

The protein resides in the cell membrane. It is found in the endoplasmic reticulum membrane. It localises to the early endosome membrane. Its subcellular location is the late endosome membrane. The protein localises to the lysosome membrane. The protein resides in the autolysosome membrane. Functionally, an alpha chain of antigen-presenting major histocompatibility complex class II (MHCII) molecule. In complex with the beta chain HLA-DRB, displays antigenic peptides on professional antigen presenting cells (APCs) for recognition by alpha-beta T cell receptor (TCR) on HLA-DR-restricted CD4-positive T cells. This guides antigen-specific T-helper effector functions, both antibody-mediated immune response and macrophage activation, to ultimately eliminate the infectious agents and transformed cells. Typically presents extracellular peptide antigens of 10 to 30 amino acids that arise from proteolysis of endocytosed antigens in lysosomes. In the tumor microenvironment, presents antigenic peptides that are primarily generated in tumor-resident APCs likely via phagocytosis of apoptotic tumor cells or macropinocytosis of secreted tumor proteins. Presents peptides derived from intracellular proteins that are trapped in autolysosomes after macroautophagy, a mechanism especially relevant for T cell selection in the thymus and central immune tolerance. The selection of the immunodominant epitopes follows two processing modes: 'bind first, cut/trim later' for pathogen-derived antigenic peptides and 'cut first, bind later' for autoantigens/self-peptides. The anchor residue at position 1 of the peptide N-terminus, usually a large hydrophobic residue, is essential for high affinity interaction with MHCII molecules. This is HLA class II histocompatibility antigen, DR alpha chain (HLA-DRA) from Homo sapiens (Human).